The sequence spans 2543 residues: Highly reducing polyketide synthase GPY1 (2543 aa).

The Ketosynthase family 3 (KS3) domain occupies 9 to 435 (REPIAIVSMA…GSTAHAVVEF (427 aa)). Residues cysteine 182, histidine 318, and histidine 358 each act as for beta-ketoacyl synthase activity in the active site. Residues 574 to 881 (TFTGQGAMWS…PFFATMLRNA (308 aa)) are malonyl-CoA:ACP transacylase (MAT) domain. An N-terminal hotdog fold region spans residues 953–1089 (HEILGSRCRG…GRAAVLETSK (137 aa)). Residues 953–1253 (HEILGSRCRG…GLQMDRATSD (301 aa)) form a dehydratase (DH) domain region. A PKS/mFAS DH domain is found at 953–1256 (HEILGSRCRG…MDRATSDDNT (304 aa)). Catalysis depends on histidine 985, which acts as the Proton acceptor; for dehydratase activity. The segment at 1103-1256 (MPLKVPLKSY…MDRATSDDNT (154 aa)) is C-terminal hotdog fold. Aspartate 1169 functions as the Proton donor; for dehydratase activity in the catalytic mechanism. A methyltransferase (CMet) domain region spans residues 1399-1587 (NDLLYRFYEE…LDEWRNELAA (189 aa)). Residues 1830-2136 (GILESLTMAQ…IEGTSNKQVV (307 aa)) are enoyl reductase (ER) domain. Positions 2161–2335 (TYIITGGLGG…ASSVDLGFVE (175 aa)) are ketoreductase (KR) domain. Positions 2464–2541 (ALQPFVCTAL…DLSARVSRMI (78 aa)) constitute a Carrier domain. Serine 2501 is subject to O-(pantetheine 4'-phosphoryl)serine.

Highly reducing polyketide synthase; part of the gene cluster that mediates the biosynthesis of gibepyrone A, a 2H-pyran-2-one metabolite exhibiting a moderate antimicrobial activity against Gram-positive bacteria and yeasts. The highly reducing polyketide synthase GPY1 is sufficient to produce gibepyrone A. GPY1 uses an acetyl-CoA starter unit, three malonyl-CoA extender units, and two SAM-dependent methylations to establish the gibepyrone A carbon backbone, followed by product release upon intramolecular cyclization. The gibepyrone A derivatives gibepyrones B and D are produced by cluster-independent P450 monooxygenases, probably to protect the fungus from the toxic product. In contrast, the formation of gibepyrones E and F from gibepyrone A is a spontaneous process and independent of enzymatic activity. The sequence is that of Highly reducing polyketide synthase GPY1 from Gibberella fujikuroi (strain CBS 195.34 / IMI 58289 / NRRL A-6831) (Bakanae and foot rot disease fungus).